Here is a 392-residue protein sequence, read N- to C-terminus: Succinyl-diaminopimelate desuccinylase (392 aa).

His75 contributes to the Zn(2+) binding site. The active site involves Asp77. Asp108 lines the Zn(2+) pocket. The active-site Proton acceptor is the Glu147. Glu148, Glu176, and His365 together coordinate Zn(2+).

The protein belongs to the peptidase M20A family. DapE subfamily. In terms of assembly, homodimer. The cofactor is Zn(2+). It depends on Co(2+) as a cofactor.

It catalyses the reaction N-succinyl-(2S,6S)-2,6-diaminopimelate + H2O = (2S,6S)-2,6-diaminopimelate + succinate. It participates in amino-acid biosynthesis; L-lysine biosynthesis via DAP pathway; LL-2,6-diaminopimelate from (S)-tetrahydrodipicolinate (succinylase route): step 3/3. Functionally, catalyzes the hydrolysis of N-succinyl-L,L-diaminopimelic acid (SDAP), forming succinate and LL-2,6-diaminopimelate (DAP), an intermediate involved in the bacterial biosynthesis of lysine and meso-diaminopimelic acid, an essential component of bacterial cell walls. This is Succinyl-diaminopimelate desuccinylase from Rhodopseudomonas palustris (strain BisB18).